The sequence spans 435 residues: Trigger factor (435 aa).

The 86-residue stretch at 163–248 (GDRVTIDFEG…LTRIEAQNLP (86 aa)) folds into the PPIase FKBP-type domain.

This sequence belongs to the FKBP-type PPIase family. Tig subfamily.

Its subcellular location is the cytoplasm. The enzyme catalyses [protein]-peptidylproline (omega=180) = [protein]-peptidylproline (omega=0). Functionally, involved in protein export. Acts as a chaperone by maintaining the newly synthesized protein in an open conformation. Functions as a peptidyl-prolyl cis-trans isomerase. The protein is Trigger factor of Leptothrix cholodnii (strain ATCC 51168 / LMG 8142 / SP-6) (Leptothrix discophora (strain SP-6)).